Here is a 116-residue protein sequence, read N- to C-terminus: uncharacterized protein (116 aa).

The interval 97–116 (AKGKGNEGREEAEEASGKSK) is disordered. The span at 100–116 (KGNEGREEAEEASGKSK) shows a compositional bias: basic and acidic residues.

It belongs to the UPF0440 family.

This is an uncharacterized protein from Pyrococcus horikoshii (strain ATCC 700860 / DSM 12428 / JCM 9974 / NBRC 100139 / OT-3).